A 221-amino-acid polypeptide reads, in one-letter code: Translation initiation factor 6 (221 aa).

It belongs to the eIF-6 family.

Binds to the 50S ribosomal subunit and prevents its association with the 30S ribosomal subunit to form the 70S initiation complex. This Methanopyrus kandleri (strain AV19 / DSM 6324 / JCM 9639 / NBRC 100938) protein is Translation initiation factor 6.